A 157-amino-acid polypeptide reads, in one-letter code: 3-hydroxyacyl-[acyl-carrier-protein] dehydratase FabZ (157 aa).

The active site involves His-58.

This sequence belongs to the thioester dehydratase family. FabZ subfamily.

The protein resides in the cytoplasm. The catalysed reaction is a (3R)-hydroxyacyl-[ACP] = a (2E)-enoyl-[ACP] + H2O. Its function is as follows. Involved in unsaturated fatty acids biosynthesis. Catalyzes the dehydration of short chain beta-hydroxyacyl-ACPs and long chain saturated and unsaturated beta-hydroxyacyl-ACPs. The chain is 3-hydroxyacyl-[acyl-carrier-protein] dehydratase FabZ from Brucella abortus biovar 1 (strain 9-941).